We begin with the raw amino-acid sequence, 225 residues long: 3-dehydroquinate dehydratase (225 aa).

3-dehydroquinate-binding positions include serine 6, glutamate 30–arginine 32, and arginine 62. Catalysis depends on histidine 118, which acts as the Proton donor/acceptor. Lysine 143 serves as the catalytic Schiff-base intermediate with substrate. Residues arginine 186, serine 205, and glutamine 209 each coordinate 3-dehydroquinate.

This sequence belongs to the type-I 3-dehydroquinase family. As to quaternary structure, homodimer.

It carries out the reaction 3-dehydroquinate = 3-dehydroshikimate + H2O. It functions in the pathway metabolic intermediate biosynthesis; chorismate biosynthesis; chorismate from D-erythrose 4-phosphate and phosphoenolpyruvate: step 3/7. Involved in the third step of the chorismate pathway, which leads to the biosynthesis of aromatic amino acids. Catalyzes the cis-dehydration of 3-dehydroquinate (DHQ) and introduces the first double bond of the aromatic ring to yield 3-dehydroshikimate. In Streptococcus sanguinis (strain SK36), this protein is 3-dehydroquinate dehydratase.